Consider the following 119-residue polypeptide: Small ribosomal subunit protein bS16 (119 aa).

Residues T89 to A103 are compositionally biased toward basic and acidic residues. Residues T89 to K119 are disordered.

Belongs to the bacterial ribosomal protein bS16 family.

The chain is Small ribosomal subunit protein bS16 from Spiroplasma kunkelii.